A 342-amino-acid polypeptide reads, in one-letter code: Lumican (342 aa).

Positions 1 to 18 (MNLGVFPLLLALIGGASS) are cleaved as a signal peptide. Y20, Y23, and Y34 each carry sulfotyrosine. The 39-residue stretch at 32–70 (ALYGRSSPNCAPECNCPESYPSAMYCDELKLKSVPMVPP) folds into the LRRNT domain. 8 LRR repeats span residues 71 to 92 (GIKY…AFEN), 95 to 118 (DLQW…VFSK), 121 to 141 (QLKK…PLPK), 142 to 163 (SLVD…DGLV), 164 to 185 (NLTF…AALK), 189 to 209 (SLEY…GLPV), 210 to 231 (SLLT…YFKR), and 234 to 254 (ALQY…PGNS). The N-linked (GlcNAc...) (keratan sulfate) asparagine glycan is linked to N92. N131 is a glycosylation site (N-linked (GlcNAc...) (keratan sulfate) asparagine). An N-linked (GlcNAc...) (keratan sulfate) asparagine glycan is attached at N164. N256 carries N-linked (GlcNAc...) (keratan sulfate) asparagine glycosylation. LRR repeat units follow at residues 259-280 (SLLE…NENL) and 281-300 (ENYY…SFCK). The cysteines at positions 299 and 332 are disulfide-linked. S308 is modified (phosphoserine). Residues 309–330 (KIKHLRLDGNHITQTSLPPDMY) form an LRR 11 repeat.

This sequence belongs to the small leucine-rich proteoglycan (SLRP) family. SLRP class II subfamily. Binds to laminin. Post-translationally, sulfated on tyrosine residue(s). In terms of processing, contains keratan sulfate. As to expression, cornea and other tissues.

The protein localises to the secreted. Its subcellular location is the extracellular space. It localises to the extracellular matrix. This is Lumican (LUM) from Bos taurus (Bovine).